The chain runs to 273 residues: 2,3,4,5-tetrahydropyridine-2,6-dicarboxylate N-succinyltransferase (273 aa).

The protein belongs to the transferase hexapeptide repeat family.

The protein resides in the cytoplasm. The enzyme catalyses (S)-2,3,4,5-tetrahydrodipicolinate + succinyl-CoA + H2O = (S)-2-succinylamino-6-oxoheptanedioate + CoA. Its pathway is amino-acid biosynthesis; L-lysine biosynthesis via DAP pathway; LL-2,6-diaminopimelate from (S)-tetrahydrodipicolinate (succinylase route): step 1/3. The chain is 2,3,4,5-tetrahydropyridine-2,6-dicarboxylate N-succinyltransferase from Acinetobacter baumannii (strain SDF).